The chain runs to 613 residues: Portal protein (613 aa).

Residues 577–613 are disordered; the sequence is ATGGDHGIRQAPSARGDAEPDHAKSKPARDPPPGAGS. Residues 592–605 are compositionally biased toward basic and acidic residues; that stretch reads GDAEPDHAKSKPAR.

The protein belongs to the herpesviridae portal protein family. In terms of assembly, homododecamerizes. Interacts with terminase subunits TRM1 and TRM3.

It localises to the virion. The protein resides in the host nucleus. Functionally, forms a portal in the viral capsid through which viral DNA is translocated during DNA packaging. Assembles as a dodecamer at a single fivefold axe of the T=16 icosahedric capsid. Binds to the molecular motor that translocates the viral DNA, termed terminase. The polypeptide is Portal protein (Homo sapiens (Human)).